The following is a 430-amino-acid chain: Aspartate aminotransferase, mitochondrial (430 aa).

A mitochondrion-targeting transit peptide spans 1–29 (MALLHSARVLSGVASAFHPGLAAAASARA). The residue at position 48 (Thr-48) is a Phosphothreonine. An N6-acetyllysine modification is found at Lys-59. Gly-65 contacts substrate. The residue at position 73 (Lys-73) is an N6-acetyllysine; alternate. At Lys-73 the chain carries N6-succinyllysine; alternate. At Lys-82 the chain carries N6-acetyllysine. Lys-90 is modified (N6-acetyllysine; alternate). Lys-90 is subject to N6-succinyllysine; alternate. Tyr-96 carries the post-translational modification 3'-nitrotyrosine; alternate. Tyr-96 carries the post-translational modification Phosphotyrosine; alternate. Lys-122 carries the N6-acetyllysine; alternate modification. Lys-122 carries the N6-succinyllysine; alternate modification. Residue Ser-143 is modified to Phosphoserine. Lys-159 is modified (N6-acetyllysine; alternate). N6-succinyllysine; alternate is present on Lys-159. Position 162 (Trp-162) interacts with substrate. Lys-185 carries the N6-acetyllysine; alternate modification. N6-succinyllysine; alternate is present on Lys-185. Residue Asn-215 coordinates substrate. Position 227 is an N6-succinyllysine (Lys-227). Lys-234 is subject to N6-acetyllysine. Lys-279 and Lys-296 each carry N6-acetyllysine; alternate. Lys-279 carries the post-translational modification N6-(pyridoxal phosphate)lysine; alternate. N6-succinyllysine; alternate is present on Lys-296. Lys-302 is subject to N6-acetyllysine. Lys-309 carries the post-translational modification N6-acetyllysine; alternate. Lys-309 carries the N6-succinyllysine; alternate modification. Arg-313 is modified (asymmetric dimethylarginine). Lys-338 carries the post-translational modification N6-acetyllysine; alternate. Lys-338 is modified (N6-succinyllysine; alternate). Lys-345 bears the N6-acetyllysine mark. Lys-363 bears the N6-acetyllysine; alternate mark. Lys-363 bears the N6-succinyllysine; alternate mark. 2 positions are modified to N6-acetyllysine: Lys-364 and Lys-387. Residues Lys-396 and Lys-404 each carry the N6-acetyllysine; alternate modification. 2 positions are modified to N6-succinyllysine; alternate: Lys-396 and Lys-404. Arg-407 is a substrate binding site.

Belongs to the class-I pyridoxal-phosphate-dependent aminotransferase family. Homodimer. Pyridoxal 5'-phosphate is required as a cofactor.

It is found in the mitochondrion matrix. The protein localises to the cell membrane. It catalyses the reaction L-aspartate + 2-oxoglutarate = oxaloacetate + L-glutamate. The catalysed reaction is L-kynurenine + 2-oxoglutarate = kynurenate + L-glutamate + H2O. Functionally, catalyzes the irreversible transamination of the L-tryptophan metabolite L-kynurenine to form kynurenic acid (KA). As a member of the malate-aspartate shuttle, it has a key role in the intracellular NAD(H) redox balance. Is important for metabolite exchange between mitochondria and cytosol, and for amino acid metabolism. Facilitates cellular uptake of long-chain free fatty acids. In Oryctolagus cuniculus (Rabbit), this protein is Aspartate aminotransferase, mitochondrial (GOT2).